The chain runs to 288 residues: Bifunctional protein FolD (288 aa).

NADP(+) is bound by residues 166-168 (GRS), serine 191, and valine 232.

Belongs to the tetrahydrofolate dehydrogenase/cyclohydrolase family. Homodimer.

It carries out the reaction (6R)-5,10-methylene-5,6,7,8-tetrahydrofolate + NADP(+) = (6R)-5,10-methenyltetrahydrofolate + NADPH. The enzyme catalyses (6R)-5,10-methenyltetrahydrofolate + H2O = (6R)-10-formyltetrahydrofolate + H(+). It functions in the pathway one-carbon metabolism; tetrahydrofolate interconversion. Functionally, catalyzes the oxidation of 5,10-methylenetetrahydrofolate to 5,10-methenyltetrahydrofolate and then the hydrolysis of 5,10-methenyltetrahydrofolate to 10-formyltetrahydrofolate. The polypeptide is Bifunctional protein FolD (Roseiflexus sp. (strain RS-1)).